A 182-amino-acid chain; its full sequence is Nuclear cap-binding protein subunit 2 (182 aa).

Residues Y13, Y35, 104–108 (RADLD), 115–119 (RQYGR), and 125–126 (QV) each bind mRNA. Residues 32–110 (NCVYVGNLSF…RIIRADLDHG (79 aa)) form the RRM domain. The tract at residues 114–182 (GRQYGRGASG…NPRYNRWKKN (69 aa)) is disordered. The span at 126–136 (VRDEMREEFDP) shows a compositional bias: basic and acidic residues. Residues 145–175 (RQPTSSRQLANYSGISSAPLGSSLELQSNPR) are compositionally biased toward polar residues.

This sequence belongs to the RRM NCBP2 family. As to quaternary structure, component of the nuclear cap-binding complex (CBC), a heterodimer composed of cbc1 and cbc2 that interacts with capped RNAs.

It localises to the cytoplasm. The protein localises to the perinuclear region. It is found in the nucleus. Functionally, component of the CBC complex, which binds co-transcriptionally to the 5' cap of pre-mRNAs and is involved in maturation, export and degradation of nuclear mRNAs. The sequence is that of Nuclear cap-binding protein subunit 2 (cbc2) from Schizosaccharomyces pombe (strain 972 / ATCC 24843) (Fission yeast).